The following is a 610-amino-acid chain: Dihydroxy-acid dehydratase (610 aa).

A Mg(2+)-binding site is contributed by Asp-81. [2Fe-2S] cluster is bound at residue Cys-122. Residues Asp-123 and Lys-124 each coordinate Mg(2+). Lys-124 carries the post-translational modification N6-carboxylysine. Cys-193 contributes to the [2Fe-2S] cluster binding site. A Mg(2+)-binding site is contributed by Glu-489. Ser-515 serves as the catalytic Proton acceptor.

The protein belongs to the IlvD/Edd family. In terms of assembly, homodimer. It depends on [2Fe-2S] cluster as a cofactor. The cofactor is Mg(2+).

It catalyses the reaction (2R)-2,3-dihydroxy-3-methylbutanoate = 3-methyl-2-oxobutanoate + H2O. The catalysed reaction is (2R,3R)-2,3-dihydroxy-3-methylpentanoate = (S)-3-methyl-2-oxopentanoate + H2O. It functions in the pathway amino-acid biosynthesis; L-isoleucine biosynthesis; L-isoleucine from 2-oxobutanoate: step 3/4. The protein operates within amino-acid biosynthesis; L-valine biosynthesis; L-valine from pyruvate: step 3/4. Functions in the biosynthesis of branched-chain amino acids. Catalyzes the dehydration of (2R,3R)-2,3-dihydroxy-3-methylpentanoate (2,3-dihydroxy-3-methylvalerate) into 2-oxo-3-methylpentanoate (2-oxo-3-methylvalerate) and of (2R)-2,3-dihydroxy-3-methylbutanoate (2,3-dihydroxyisovalerate) into 2-oxo-3-methylbutanoate (2-oxoisovalerate), the penultimate precursor to L-isoleucine and L-valine, respectively. This chain is Dihydroxy-acid dehydratase, found in Xylella fastidiosa (strain M23).